The following is a 761-amino-acid chain: 1,2-alpha-glucosylglycerol phosphorylase (761 aa).

327–328 (YQ) contacts glycerol. 333 to 334 (WD) is a binding site for substrate. Glu475 serves as the catalytic Proton donor. 587-588 (KQ) lines the substrate pocket.

Belongs to the glycosyl hydrolase 65 family. Homodimer.

It catalyses the reaction 2-O-(alpha-D-glucopyranosyl)glycerol + phosphate = beta-D-glucose 1-phosphate + glycerol. Its function is as follows. Catalyzes both the (1) reversible phosphorolysis of 2-O-alpha-D-glucopyranosyl-sn-glycerol (GG) from beta-D-glucose 1-phosphate (betaGlc1P) and glycerol and (2) the hydrolysis of betaGlc1P. the betaGlc1P hydrolysis is a glucosyl-transfer reaction to an acceptor water molecule that produces an anomer-inverted alpha-glucose, not a phosphatase-type reaction. In the absence of glycerol produces alpha-D-glucopyranose and phosphate from beta-D-glucopyranose 1-phosphate. In Bacillus selenitireducens (strain ATCC 700615 / DSM 15326 / MLS10), this protein is 1,2-alpha-glucosylglycerol phosphorylase.